The following is a 459-amino-acid chain: RuvB-like helicase 1 (459 aa).

75-82 (GGPSTGKT) lines the ATP pocket.

Belongs to the RuvB family. In terms of assembly, may form heterododecamers with RVB2. Component of the SWR1 chromatin remodeling complex, the INO80 chromatin remodeling complex, and of the R2TP complex.

Its subcellular location is the nucleus. It carries out the reaction ATP + H2O = ADP + phosphate + H(+). DNA helicase which participates in several chromatin remodeling complexes, including the SWR1 and the INO80 complexes. The SWR1 complex mediates the ATP-dependent exchange of histone H2A for the H2A variant HZT1 leading to transcriptional regulation of selected genes by chromatin remodeling. The INO80 complex remodels chromatin by shifting nucleosomes and is involved in DNA repair. Also involved in pre-rRNA processing. The sequence is that of RuvB-like helicase 1 (RVB1) from Eremothecium gossypii (strain ATCC 10895 / CBS 109.51 / FGSC 9923 / NRRL Y-1056) (Yeast).